We begin with the raw amino-acid sequence, 141 residues long: Large ribosomal subunit protein uL11 (141 aa).

This sequence belongs to the universal ribosomal protein uL11 family. Part of the ribosomal stalk of the 50S ribosomal subunit. Interacts with L10 and the large rRNA to form the base of the stalk. L10 forms an elongated spine to which L12 dimers bind in a sequential fashion forming a multimeric L10(L12)X complex. Post-translationally, one or more lysine residues are methylated.

In terms of biological role, forms part of the ribosomal stalk which helps the ribosome interact with GTP-bound translation factors. The chain is Large ribosomal subunit protein uL11 from Acetivibrio thermocellus (strain ATCC 27405 / DSM 1237 / JCM 9322 / NBRC 103400 / NCIMB 10682 / NRRL B-4536 / VPI 7372) (Clostridium thermocellum).